We begin with the raw amino-acid sequence, 296 residues long: Nitrogenase iron protein (296 aa).

11-18 (GKGGIGKS) is a binding site for ATP. Cys99 contributes to the [4Fe-4S] cluster binding site. Arg102 is subject to ADP-ribosylarginine; by dinitrogenase reductase ADP-ribosyltransferase. Residue Cys134 coordinates [4Fe-4S] cluster.

Belongs to the NifH/BchL/ChlL family. In terms of assembly, homodimer. [4Fe-4S] cluster serves as cofactor. In terms of processing, the reversible ADP-ribosylation of Arg-102 inactivates the nitrogenase reductase and regulates nitrogenase activity.

It catalyses the reaction N2 + 8 reduced [2Fe-2S]-[ferredoxin] + 16 ATP + 16 H2O = H2 + 8 oxidized [2Fe-2S]-[ferredoxin] + 2 NH4(+) + 16 ADP + 16 phosphate + 6 H(+). Its function is as follows. The key enzymatic reactions in nitrogen fixation are catalyzed by the nitrogenase complex, which has 2 components: the iron protein and the molybdenum-iron protein. In Dechloromonas aromatica (strain RCB), this protein is Nitrogenase iron protein.